A 410-amino-acid chain; its full sequence is LL-diaminopimelate aminotransferase (410 aa).

Positions 15 and 42 each coordinate substrate. Pyridoxal 5'-phosphate-binding positions include Y72, 108–109, Y132, N187, Y218, and 246–248; these read SK and SFS. Residues K109, Y132, and N187 each contribute to the substrate site. An N6-(pyridoxal phosphate)lysine modification is found at K249. 2 residues coordinate pyridoxal 5'-phosphate: R257 and N292. Substrate contacts are provided by N292 and R388.

Belongs to the class-I pyridoxal-phosphate-dependent aminotransferase family. LL-diaminopimelate aminotransferase subfamily. Homodimer. Pyridoxal 5'-phosphate serves as cofactor.

The enzyme catalyses (2S,6S)-2,6-diaminopimelate + 2-oxoglutarate = (S)-2,3,4,5-tetrahydrodipicolinate + L-glutamate + H2O + H(+). It participates in amino-acid biosynthesis; L-lysine biosynthesis via DAP pathway; LL-2,6-diaminopimelate from (S)-tetrahydrodipicolinate (aminotransferase route): step 1/1. Involved in the synthesis of meso-diaminopimelate (m-DAP or DL-DAP), required for both lysine and peptidoglycan biosynthesis. Catalyzes the direct conversion of tetrahydrodipicolinate to LL-diaminopimelate. The chain is LL-diaminopimelate aminotransferase from Geobacter metallireducens (strain ATCC 53774 / DSM 7210 / GS-15).